The primary structure comprises 249 residues: NADH dehydrogenase [ubiquinone] flavoprotein 2, mitochondrial (249 aa).

The transit peptide at 1 to 32 (MFFSAALRARAAGLTAHWGRHVRNLHKTAKQN) directs the protein to the mitochondrion. The residue at position 61 (Lys-61) is an N6-acetyllysine. Residues Cys-135, Cys-140, Cys-176, and Cys-180 each contribute to the [2Fe-2S] cluster site. Residue Tyr-193 is modified to Phosphotyrosine; by SRC. The segment at 213–249 (IPKPGPRSGRFSCEPAGGLTSLTEPPKGPGFGVQAGL) is disordered.

The protein belongs to the complex I 24 kDa subunit family. As to quaternary structure, core subunit of respiratory chain NADH dehydrogenase (Complex I) which is composed of 45 different subunits. This is a component of the flavoprotein-sulfur (FP) fragment of the enzyme. Requires [2Fe-2S] cluster as cofactor.

The protein resides in the mitochondrion inner membrane. The catalysed reaction is a ubiquinone + NADH + 5 H(+)(in) = a ubiquinol + NAD(+) + 4 H(+)(out). In terms of biological role, core subunit of the mitochondrial membrane respiratory chain NADH dehydrogenase (Complex I) which catalyzes electron transfer from NADH through the respiratory chain, using ubiquinone as an electron acceptor. Parts of the peripheral arm of the enzyme, where the electrons from NADH are accepted by flavin mononucleotide (FMN) and then passed along a chain of iron-sulfur clusters by electron tunnelling to the final acceptor ubiquinone. Contains one iron-sulfur cluster. The sequence is that of NADH dehydrogenase [ubiquinone] flavoprotein 2, mitochondrial from Pan troglodytes (Chimpanzee).